Here is a 503-residue protein sequence, read N- to C-terminus: Probable dolichyl pyrophosphate Man9GlcNAc2 alpha-1,3-glucosyltransferase (503 aa).

Over 1 to 46 the chain is Cytoplasmic; sequence MKERIKDKAWRPQFIKLNNPDTSKKIVSQKSKKPEIVDLSSPGNND. The helical transmembrane segment at 47–67 threads the bilayer; the sequence is LVTISILCVLLCFQLAISLNP. Residues 68 to 151 lie on the Lumenal side of the membrane; that stretch reads HSGESQPPMY…SRGYESIAHK (84 aa). Residues 152–172 traverse the membrane as a helical segment; it reads LFMRLSAIIPFYIFYLPPLIF. Topologically, residues 173–181 are cytoplasmic; it reads YFTRSKKMS. Residues 182 to 202 form a helical membrane-spanning segment; it reads PILYALALLYPSLLVIDNGHF. Residues 203 to 211 lie on the Lumenal side of the membrane; sequence QYNSISLGL. A helical membrane pass occupies residues 212–232; that stretch reads FLATYMFLTKNFTIIGSILFV. Topologically, residues 233 to 239 are cytoplasmic; it reads AALNYKQ. The chain crosses the membrane as a helical span at residues 240–257; sequence MELYHALPVFVFILARSI. Topologically, residues 258 to 268 are lumenal; the sequence is NKTQLFNSFRR. A helical membrane pass occupies residues 269–289; it reads ILTIGLFVVGTFLIIWLPFLL. At 290–332 the chain is on the cytoplasmic side; it reads TGTAKDVIIRVFPFNRGLYEDKVASFWCAFSFILKRLPLQSVQ. Residues 333 to 353 traverse the membrane as a helical segment; that stretch reads IYISTALVLAGSAPSLLVLFL. The Lumenal segment spans residues 354–359; sequence RPTEKQ. A helical transmembrane segment spans residues 360 to 379; sequence FRISLTATGLSFFLFSFHVH. Topologically, residues 380 to 382 are cytoplasmic; that stretch reads EKT. A helical membrane pass occupies residues 383-403; it reads ILLAAVPALLLISEYTSLVIW. The Lumenal segment spans residues 404–420; it reads FLNITNISIFSLCVKDN. Residues 421 to 441 form a helical membrane-spanning segment; that stretch reads FALSLSFFFAYFVVSYAYTAP. The Cytoplasmic portion of the chain corresponds to 442-443; the sequence is RK. A helical membrane pass occupies residues 444–464; that stretch reads ISHILTILIGFAICILELYGP. Over 465 to 474 the chain is Lumenal; sequence SNQRFPHIYQ. The helical transmembrane segment at 475 to 495 threads the bilayer; sequence LANAFFSCVHFIYFLLYLSFA. The Cytoplasmic portion of the chain corresponds to 496–503; it reads SFEKTKKE.

It belongs to the ALG6/ALG8 glucosyltransferase family.

The protein localises to the endoplasmic reticulum membrane. The catalysed reaction is an alpha-D-Man-(1-&gt;2)-alpha-D-Man-(1-&gt;2)-alpha-D-Man-(1-&gt;3)-[alpha-D-Man-(1-&gt;2)-alpha-D-Man-(1-&gt;3)-[alpha-D-Man-(1-&gt;2)-alpha-D-Man-(1-&gt;6)]-alpha-D-Man-(1-&gt;6)]-beta-D-Man-(1-&gt;4)-beta-D-GlcNAc-(1-&gt;4)-alpha-D-GlcNAc-diphospho-di-trans,poly-cis-dolichol + a di-trans,poly-cis-dolichyl beta-D-glucosyl phosphate = an alpha-D-Glc-(1-&gt;3)-alpha-D-Man-(1-&gt;2)-alpha-D-Man-(1-&gt;2)-alpha-D-Man-(1-&gt;3)-[alpha-D-Man-(1-&gt;2)-alpha-D-Man-(1-&gt;3)-[alpha-D-Man-(1-&gt;2)-alpha-D-Man-(1-&gt;6)]-alpha-D-Man-(1-&gt;6)]-beta-D-Man-(1-&gt;4)-beta-D-GlcNAc-(1-&gt;4)-alpha-D-GlcNAc-diphospho-di-trans,poly-cis-dolichol + a di-trans,poly-cis-dolichyl phosphate + H(+). It participates in protein modification; protein glycosylation. Its function is as follows. Adds the first glucose residue to the lipid-linked oligosaccharide precursor for N-linked glycosylation. Transfers glucose from dolichyl phosphate glucose (Dol-P-Glc) onto the lipid-linked oligosaccharide Man(9)GlcNAc(2)-PP-Dol. The chain is Probable dolichyl pyrophosphate Man9GlcNAc2 alpha-1,3-glucosyltransferase from Caenorhabditis elegans.